The chain runs to 631 residues: MSTTTLTRREQRAKAQHFIDTLEGTAFPNSKRIYVTGSQHDIRVPMREIQLSPTLIGGSKDNPQFEENEAVPVYDTSGPYGDPEVAINVQQGLAKLRQPWIDARNDSEELDDRSSAYTRERLADDGLDDLRFTGLLTPKRAKAGKRVTQLHYARKGIVTPEMEFIAIRENMGRERIRSEVLRHQHPGMSFGARLPENITPEFVRDEVAAGRAIIPANINHPESEPMIIGRNFLVKVNANIGNSAVTSSIEEEVEKLVWSTRWGADTVMDLSTGRYIHETREWILRNSPVPIGTVPIYQALEKVNGIAEDLTWEAFRDTLLEQAEQGVDYFTIHAGVLLRYVPMTAKRLTGIVSRGGSIMAKWCLSHHKENFLFEHFREICEICAAYDVSLSLGDGLRPGSIQDANDEAQFSELHTLGELTKIAWEYDVQVMIEGPGHVPMHMIQRNMTEELESCHEAPFYTLGPLTTDIAPGYDHFTSGIGAAMIGWFGCAMLCYVTPKEHLGLPNKEDVKQGLITYKIAAHAADLAKGHPGAQIRDNAMSKARFEFRWEDQFNLALDPFTARAYHDETLPQESGKVAHFCSMCGPKFCSMKISQEVRDYAAAQTIEVGMADMSENFRAKGGEIYLKREEA.

Residues asparagine 239, methionine 268, tyrosine 297, histidine 333, 353-355, 394-397, and glutamate 433 each bind substrate; these read SRG and DGLR. Histidine 437 serves as a coordination point for Zn(2+). Tyrosine 460 provides a ligand contact to substrate. Residue histidine 501 participates in Zn(2+) binding. [4Fe-4S] cluster contacts are provided by cysteine 581, cysteine 584, and cysteine 589.

The protein belongs to the ThiC family. Homodimer. [4Fe-4S] cluster serves as cofactor.

It catalyses the reaction 5-amino-1-(5-phospho-beta-D-ribosyl)imidazole + S-adenosyl-L-methionine = 4-amino-2-methyl-5-(phosphooxymethyl)pyrimidine + CO + 5'-deoxyadenosine + formate + L-methionine + 3 H(+). Its pathway is cofactor biosynthesis; thiamine diphosphate biosynthesis. In terms of biological role, catalyzes the synthesis of the hydroxymethylpyrimidine phosphate (HMP-P) moiety of thiamine from aminoimidazole ribotide (AIR) in a radical S-adenosyl-L-methionine (SAM)-dependent reaction. This chain is Phosphomethylpyrimidine synthase, found in Salmonella heidelberg (strain SL476).